Consider the following 155-residue polypeptide: MSKVLEQVEAIVAPITDELQLELVDIAFEKEGPNWFLRIFIDKDGGVDIDECAAVSEKVSEKMDESDPITQNYFLEVSSPGAERPLKKEQDFENAVGKYVHVTSYEPIDGRKMWEGTLVSYDGTTLVITITDKTRKITCEIPKDKVAKARLAIQF.

The protein belongs to the RimP family.

The protein resides in the cytoplasm. Required for maturation of 30S ribosomal subunits. The protein is Ribosome maturation factor RimP of Listeria innocua serovar 6a (strain ATCC BAA-680 / CLIP 11262).